Reading from the N-terminus, the 731-residue chain is Inclusion body clearance protein IML2 (731 aa).

Residues 1 to 26 (MFRVFGSFGSKGNQSSGEEQSTKTKQ) are disordered. Polar residues predominate over residues 10–26 (SKGNQSSGEEQSTKTKQ). Phosphoserine is present on residues Ser-265, Ser-268, and Ser-378. Residue Thr-380 is modified to Phosphothreonine. A phosphoserine mark is found at Ser-383 and Ser-392.

It belongs to the IML2 family. In terms of assembly, interacts with lipid droplet proteins PET10 and PDR16.

Its subcellular location is the cytoplasm. It localises to the nucleus. Functionally, inclusion body (IB) resident protein that interacts strongly with lipid droplet (LD) proteins. Involved in LD-mediated IB clearing after protein folding stress, probably by enabling access to the IBs of an LD-stored soluble sterol derivative that acts as a chaperone in inclusion clearing. In Saccharomyces cerevisiae (strain YJM789) (Baker's yeast), this protein is Inclusion body clearance protein IML2 (IML2).